Reading from the N-terminus, the 1063-residue chain is Kinesin-like protein KIN-7H (1063 aa).

In terms of domain architecture, Kinesin motor spans 18 to 342 (KIYVSVRMRP…LLFASCAKEV (325 aa)). 106 to 113 (GQTSSGKT) contacts ATP. A coiled-coil region spans residues 351–436 (VMSDKALVKH…KNQEKETLST (86 aa)). Residues 574–664 (SDISIGPVEN…ESNLTKNPAL (91 aa)) form a disordered region.

It belongs to the TRAFAC class myosin-kinesin ATPase superfamily. Kinesin family. KIN-7 subfamily.

The chain is Kinesin-like protein KIN-7H from Arabidopsis thaliana (Mouse-ear cress).